The chain runs to 432 residues: Adenylosuccinate synthetase (432 aa).

GTP-binding positions include Gly12–Lys18 and Gly40–Thr42. The active-site Proton acceptor is Asp13. Residues Asp13 and Gly40 each contribute to the Mg(2+) site. Residues Asp13–Lys16, Asn38–His41, Thr132, Arg146, Gln226, Thr241, and Arg305 contribute to the IMP site. His41 functions as the Proton donor in the catalytic mechanism. Thr301–Arg307 contributes to the substrate binding site. GTP-binding positions include Arg307, Lys333–Asp335, and Ser415–Ser417.

This sequence belongs to the adenylosuccinate synthetase family. Homodimer. Requires Mg(2+) as cofactor.

It is found in the cytoplasm. The enzyme catalyses IMP + L-aspartate + GTP = N(6)-(1,2-dicarboxyethyl)-AMP + GDP + phosphate + 2 H(+). The protein operates within purine metabolism; AMP biosynthesis via de novo pathway; AMP from IMP: step 1/2. Its function is as follows. Plays an important role in the de novo pathway of purine nucleotide biosynthesis. Catalyzes the first committed step in the biosynthesis of AMP from IMP. This is Adenylosuccinate synthetase from Sinorhizobium fredii (strain NBRC 101917 / NGR234).